The primary structure comprises 398 residues: Isopenicillin N epimerase (398 aa).

N6-(pyridoxal phosphate)lysine is present on Lys-217.

It belongs to the class-V pyridoxal-phosphate-dependent aminotransferase family. Pyridoxal 5'-phosphate is required as a cofactor.

The catalysed reaction is isopenicillin N = penicillin N. It participates in antibiotic biosynthesis; cephalosporin C biosynthesis. Functionally, catalyzes the reversible isomerization between isopenicillin N and penicillin N. The polypeptide is Isopenicillin N epimerase (cefD) (Streptomyces clavuligerus).